A 604-amino-acid chain; its full sequence is ATP-dependent RNA helicase DED1 (604 aa).

Residues M1–N19 are compositionally biased toward polar residues. A disordered region spans residues M1–S55. The residue at position 2 (A2) is an N-acetylalanine. Over residues R34–G45 the composition is skewed to low complexity. Gly residues predominate over residues G46–S55. An Omega-N-methylarginine modification is found at R51. Position 62 is a dimethylated arginine; alternate (R62). The residue at position 62 (R62) is an Omega-N-methylarginine; alternate. A compositionally biased stretch (gly residues) spans N67–G76. A disordered region spans residues N67 to V94. A Q motif motif is present at residues T142–K170. A Glycyl lysine isopeptide (Lys-Gly) (interchain with G-Cter in ubiquitin) cross-link involves residue K158. The Helicase ATP-binding domain maps to V173–L362. Residue A186–T193 coordinates ATP. Residues S215, S218, and S263 each carry the phosphoserine modification. The DEAD box motif lies at D306–D309. Residues N373–M533 enclose the Helicase C-terminal domain. The disordered stretch occupies residues M533–W604. Residues S535, S539, and S543 each carry the phosphoserine modification. R545 is modified (dimethylated arginine; alternate). R545 carries the omega-N-methylarginine; alternate modification. Phosphoserine is present on residues S572 and S576. Omega-N-methylarginine is present on R578. Over residues G584 to W604 the composition is skewed to low complexity. At S598 the chain carries Phosphoserine.

This sequence belongs to the DEAD box helicase family. DDX3/DED1 subfamily. Interacts with the L-A virus GAG protein and the whole L-A virus particles.

It localises to the cytoplasm. It carries out the reaction ATP + H2O = ADP + phosphate + H(+). Its function is as follows. ATP-binding RNA helicase involved in translation initiation. Remodels RNA in response to ADP and ATP concentrations by facilitating disruption, but also formation of RNA duplexes. Has weak ATP-dependent affinity for dsRNA, but strong ATP-dependent affinity for ssRNA. Acts as a virus host factor involved in the replication of the MBV and the L-A viruses by promoting the negative-strand RNA synthesis. May be involved in recognition of the preinitiation complex and DNA binding of the RNA polymerase III and play a role in mRNA splicing. This chain is ATP-dependent RNA helicase DED1, found in Saccharomyces cerevisiae (strain ATCC 204508 / S288c) (Baker's yeast).